Consider the following 398-residue polypeptide: S-adenosylmethionine synthase (398 aa).

Residue histidine 26 participates in ATP binding. Aspartate 28 provides a ligand contact to Mg(2+). Glutamate 54 contacts K(+). Positions 67 and 110 each coordinate L-methionine. Residues 110-120 (QSPDIAQGVNE) are flexible loop. Residues 177-179 (DAK), 243-244 (RF), aspartate 252, 258-259 (RK), alanine 275, and lysine 279 contribute to the ATP site. Aspartate 252 serves as a coordination point for L-methionine. Position 283 (lysine 283) interacts with L-methionine.

The protein belongs to the AdoMet synthase family. In terms of assembly, homotetramer; dimer of dimers. It depends on Mg(2+) as a cofactor. The cofactor is K(+).

It localises to the cytoplasm. The enzyme catalyses L-methionine + ATP + H2O = S-adenosyl-L-methionine + phosphate + diphosphate. The protein operates within amino-acid biosynthesis; S-adenosyl-L-methionine biosynthesis; S-adenosyl-L-methionine from L-methionine: step 1/1. Functionally, catalyzes the formation of S-adenosylmethionine (AdoMet) from methionine and ATP. The overall synthetic reaction is composed of two sequential steps, AdoMet formation and the subsequent tripolyphosphate hydrolysis which occurs prior to release of AdoMet from the enzyme. The sequence is that of S-adenosylmethionine synthase from Desulfotalea psychrophila (strain LSv54 / DSM 12343).